The primary structure comprises 173 residues: Trafficking regulator of GLUT4 1 (173 aa).

A compositionally biased stretch (polar residues) spans 1-17 (MANPVQPQLQDPGSTSP). Positions 1–22 (MANPVQPQLQDPGSTSPLDLPE) are disordered. Topologically, residues 1–102 (MANPVQPQLQ…QDQEAPKDYL (102 aa)) are cytoplasmic. Phosphoserine is present on residues Ser16, Ser43, Ser45, Ser70, Ser84, and Ser85. Positions 103–123 (VLAIASCFCPVWPLNLIPLIF) form an intramembrane region, helical. Residues 124 to 150 (SIMSRSSVQQGDLDGARRLGRLARLLS) lie on the Cytoplasmic side of the membrane. The helical transmembrane segment at 151–171 (ITFIILGIVIIIVAVTVNFTV) threads the bilayer. At 172–173 (PK) the chain is on the extracellular side.

This sequence belongs to the CD225/Dispanin family. As to quaternary structure, interacts with SLC2A4; the interaction is required for proper SLC2A4 reacycling after insulin stimulation. As to expression, present in adipose tissue and undetectable in other tissues (at protein level).

The protein resides in the cell membrane. The protein localises to the endomembrane system. It is found in the cytoplasm. Its subcellular location is the perinuclear region. In terms of biological role, regulates insulin-mediated adipose tissue glucose uptake and transport by modulation of SLC2A4 recycling. Not required for SLC2A4 membrane fusion upon an initial stimulus, but rather is necessary for proper protein recycling during prolonged insulin stimulation. This Rattus norvegicus (Rat) protein is Trafficking regulator of GLUT4 1.